The primary structure comprises 233 residues: Pyridoxal 5'-phosphate synthase subunit PdxT (233 aa).

61 to 63 (GES) provides a ligand contact to L-glutamine. The Nucleophile role is filled by C93. Residues R127 and 163–164 (IR) each bind L-glutamine. Residues H212 and E214 each act as charge relay system in the active site.

Belongs to the glutaminase PdxT/SNO family. In the presence of PdxS, forms a dodecamer of heterodimers. Only shows activity in the heterodimer.

The enzyme catalyses aldehydo-D-ribose 5-phosphate + D-glyceraldehyde 3-phosphate + L-glutamine = pyridoxal 5'-phosphate + L-glutamate + phosphate + 3 H2O + H(+). It carries out the reaction L-glutamine + H2O = L-glutamate + NH4(+). It participates in cofactor biosynthesis; pyridoxal 5'-phosphate biosynthesis. Its function is as follows. Catalyzes the hydrolysis of glutamine to glutamate and ammonia as part of the biosynthesis of pyridoxal 5'-phosphate. The resulting ammonia molecule is channeled to the active site of PdxS. The sequence is that of Pyridoxal 5'-phosphate synthase subunit PdxT from Paenarthrobacter aurescens (strain TC1).